Reading from the N-terminus, the 213-residue chain is Protein Pars_0011 (213 aa).

In terms of domain architecture, AMMECR1 spans 8–201 (EEGRYLVKLA…EREPNEEVYQ (194 aa)).

This chain is Protein Pars_0011, found in Pyrobaculum arsenaticum (strain DSM 13514 / JCM 11321 / PZ6).